The chain runs to 319 residues: Acetyl-coenzyme A carboxylase carboxyl transferase subunit alpha (319 aa).

Positions 35–296 constitute a CoA carboxyltransferase C-terminal domain; that stretch reads NIDEEVHRLR…KAQLLTDLAD (262 aa).

The protein belongs to the AccA family. Acetyl-CoA carboxylase is a heterohexamer composed of biotin carboxyl carrier protein (AccB), biotin carboxylase (AccC) and two subunits each of ACCase subunit alpha (AccA) and ACCase subunit beta (AccD).

The protein resides in the cytoplasm. It carries out the reaction N(6)-carboxybiotinyl-L-lysyl-[protein] + acetyl-CoA = N(6)-biotinyl-L-lysyl-[protein] + malonyl-CoA. It functions in the pathway lipid metabolism; malonyl-CoA biosynthesis; malonyl-CoA from acetyl-CoA: step 1/1. Its function is as follows. Component of the acetyl coenzyme A carboxylase (ACC) complex. First, biotin carboxylase catalyzes the carboxylation of biotin on its carrier protein (BCCP) and then the CO(2) group is transferred by the carboxyltransferase to acetyl-CoA to form malonyl-CoA. This chain is Acetyl-coenzyme A carboxylase carboxyl transferase subunit alpha, found in Escherichia coli O45:K1 (strain S88 / ExPEC).